The following is a 227-amino-acid chain: Casparian strip membrane protein 2 (227 aa).

At 1–59 the chain is on the cytoplasmic side; it reads MSSTSEATVIHMDGAAGKTPATAVPPPPPPAPTAPVQQQRKAGGVPFLLRSGAEGFRRC. Residues 17–37 are disordered; it reads GKTPATAVPPPPPPAPTAPVQ. The span at 23-33 shows a compositional bias: pro residues; the sequence is AVPPPPPPAPT. Residues 60–80 traverse the membrane as a helical segment; the sequence is MALLDLLLRVAAMGPTLAAAI. Topologically, residues 81-107 are extracellular; sequence STGTSDETLSVFTHYFQFRARFDDFSA. The chain crosses the membrane as a helical span at residues 108–128; it reads FTFFMVANAVAAGYLLMSLPF. Topologically, residues 129 to 149 are cytoplasmic; the sequence is SAFGVIRPKATSVRLLLLICD. A helical transmembrane segment spans residues 150 to 170; the sequence is TIMVVLVTAAASAAAAIVYVA. Residues 171–197 lie on the Extracellular side of the membrane; that stretch reads HEGNRRANWVPICMQFHGFCKRTSGAV. A helical transmembrane segment spans residues 198–218; that stretch reads VASFLAVLIFILLVFLGACAI. Residues 219 to 227 are Cytoplasmic-facing; sequence RRRHTTTKH.

The protein belongs to the Casparian strip membrane proteins (CASP) family. In terms of assembly, homodimer and heterodimers.

It localises to the cell membrane. Functionally, regulates membrane-cell wall junctions and localized cell wall deposition. Required for establishment of the Casparian strip membrane domain (CSD) and the subsequent formation of Casparian strips, a cell wall modification of the root endodermis that determines an apoplastic barrier between the intraorganismal apoplasm and the extraorganismal apoplasm and prevents lateral diffusion. The chain is Casparian strip membrane protein 2 from Brachypodium distachyon (Purple false brome).